The following is an 89-amino-acid chain: Putative regulatory protein CLL_A1210 (89 aa).

It belongs to the RemA family.

This is Putative regulatory protein CLL_A1210 from Clostridium botulinum (strain Eklund 17B / Type B).